The following is a 297-amino-acid chain: 33 kDa chaperonin (297 aa).

Intrachain disulfides connect Cys239-Cys241 and Cys272-Cys275.

It belongs to the HSP33 family. In terms of processing, under oxidizing conditions two disulfide bonds are formed involving the reactive cysteines. Under reducing conditions zinc is bound to the reactive cysteines and the protein is inactive.

Its subcellular location is the cytoplasm. Redox regulated molecular chaperone. Protects both thermally unfolding and oxidatively damaged proteins from irreversible aggregation. Plays an important role in the bacterial defense system toward oxidative stress. The protein is 33 kDa chaperonin of Clostridium acetobutylicum (strain ATCC 824 / DSM 792 / JCM 1419 / IAM 19013 / LMG 5710 / NBRC 13948 / NRRL B-527 / VKM B-1787 / 2291 / W).